The primary structure comprises 415 residues: Methylthioribose-1-phosphate isomerase (415 aa).

Aspartate 284 serves as the catalytic Proton donor.

Belongs to the eIF-2B alpha/beta/delta subunits family. MtnA subfamily.

It is found in the cytoplasm. It localises to the nucleus. It catalyses the reaction 5-(methylsulfanyl)-alpha-D-ribose 1-phosphate = 5-(methylsulfanyl)-D-ribulose 1-phosphate. Its pathway is amino-acid biosynthesis; L-methionine biosynthesis via salvage pathway; L-methionine from S-methyl-5-thio-alpha-D-ribose 1-phosphate: step 1/6. Catalyzes the interconversion of methylthioribose-1-phosphate (MTR-1-P) into methylthioribulose-1-phosphate (MTRu-1-P). This chain is Methylthioribose-1-phosphate isomerase, found in Vanderwaltozyma polyspora (strain ATCC 22028 / DSM 70294 / BCRC 21397 / CBS 2163 / NBRC 10782 / NRRL Y-8283 / UCD 57-17) (Kluyveromyces polysporus).